A 418-amino-acid chain; its full sequence is Deubiquitinase and deneddylase Dub1 (418 aa).

Residues 1–10 (MLSPTNSTSK) are compositionally biased toward polar residues. The segment at 1–23 (MLSPTNSTSKKAPVPPQDSSKPV) is disordered. The chain crosses the membrane as a helical span at residues 40–60 (TALAVLLVVVTLGLILLFYSF). The interval 72–143 (TRPSTKEQPT…PPLPPKAPKP (72 aa)) is disordered. Residues 86 to 141 (VPLPSPPLAVPRPSTPPPPVISRPSTPPAPTPAISPPSTPSAPKPSTPPPLPPKAP) show a composition bias toward pro residues. Catalysis depends on residues histidine 288, aspartate 305, and cysteine 358.

It belongs to the peptidase C48 family.

It localises to the secreted. Its subcellular location is the host cell. It is found in the membrane. In terms of biological role, effector proteins function to alter host cell physiology and promote bacterial survival in host tissues. This protease possesses deubiquitinating and deneddylating activities. The sequence is that of Deubiquitinase and deneddylase Dub1 (cdu1) from Chlamydia trachomatis serovar D (strain ATCC VR-885 / DSM 19411 / UW-3/Cx).